Consider the following 465-residue polypeptide: Serine carboxypeptidase-like 46 (465 aa).

The signal sequence occupies residues 1 to 25 (MPRLQCLTMATSLILLLQALSLVSS). 3 disulfides stabilise this stretch: cysteine 88–cysteine 344, cysteine 245–cysteine 263, and cysteine 288–cysteine 313. N-linked (GlcNAc...) asparagine glycosylation is found at asparagine 137 and asparagine 170. Residue serine 179 is part of the active site. Asparagine 246 carries N-linked (GlcNAc...) asparagine glycosylation. Residues aspartate 381 and histidine 438 contribute to the active site.

It belongs to the peptidase S10 family. In terms of tissue distribution, ubiquitous.

The protein resides in the secreted. Functionally, probable carboxypeptidase. This is Serine carboxypeptidase-like 46 (SCPL46) from Arabidopsis thaliana (Mouse-ear cress).